The primary structure comprises 278 residues: Dermonecrotic toxin LlSicTox-alphaIII3iii (278 aa).

His5 is a catalytic residue. Residues Glu25 and Asp27 each coordinate Mg(2+). His40 acts as the Nucleophile in catalysis. Cys44 and Cys50 are disulfide-bonded. Asp84 serves as a coordination point for Mg(2+).

This sequence belongs to the arthropod phospholipase D family. Class I subfamily. Mg(2+) is required as a cofactor. Expressed by the venom gland.

It is found in the secreted. The catalysed reaction is an N-(acyl)-sphingosylphosphocholine = an N-(acyl)-sphingosyl-1,3-cyclic phosphate + choline. It carries out the reaction an N-(acyl)-sphingosylphosphoethanolamine = an N-(acyl)-sphingosyl-1,3-cyclic phosphate + ethanolamine. It catalyses the reaction a 1-acyl-sn-glycero-3-phosphocholine = a 1-acyl-sn-glycero-2,3-cyclic phosphate + choline. The enzyme catalyses a 1-acyl-sn-glycero-3-phosphoethanolamine = a 1-acyl-sn-glycero-2,3-cyclic phosphate + ethanolamine. In terms of biological role, dermonecrotic toxins cleave the phosphodiester linkage between the phosphate and headgroup of certain phospholipids (sphingolipid and lysolipid substrates), forming an alcohol (often choline) and a cyclic phosphate. This toxin acts on sphingomyelin (SM). It may also act on ceramide phosphoethanolamine (CPE), lysophosphatidylcholine (LPC) and lysophosphatidylethanolamine (LPE), but not on lysophosphatidylserine (LPS), and lysophosphatidylglycerol (LPG). It acts by transphosphatidylation, releasing exclusively cyclic phosphate products as second products. Induces dermonecrosis, hemolysis, increased vascular permeability, edema, inflammatory response, and platelet aggregation. The polypeptide is Dermonecrotic toxin LlSicTox-alphaIII3iii (Loxosceles laeta (South American recluse spider)).